The primary structure comprises 307 residues: Protoheme IX farnesyltransferase (307 aa).

The next 8 membrane-spanning stretches (helical) occupy residues 32 to 52 (VVEL…RGIP), 54 to 74 (LWLV…AGAF), 105 to 125 (LVFA…FTNW), 126 to 146 (LAAG…TLIL), 169 to 189 (WAVV…VIFL), 222 to 242 (VVGL…LLLI), 244 to 264 (VARM…WFLY), and 287 to 307 (GSIA…LLPF).

It belongs to the UbiA prenyltransferase family. Protoheme IX farnesyltransferase subfamily.

The protein resides in the cell membrane. The enzyme catalyses heme b + (2E,6E)-farnesyl diphosphate + H2O = Fe(II)-heme o + diphosphate. It functions in the pathway porphyrin-containing compound metabolism; heme O biosynthesis; heme O from protoheme: step 1/1. Converts heme B (protoheme IX) to heme O by substitution of the vinyl group on carbon 2 of heme B porphyrin ring with a hydroxyethyl farnesyl side group. The chain is Protoheme IX farnesyltransferase from Leifsonia xyli subsp. xyli (strain CTCB07).